Reading from the N-terminus, the 354-residue chain is Photosystem II protein D1 (354 aa).

An N-acetylthreonine modification is found at Thr-2. Thr-2 carries the phosphothreonine modification. Helical transmembrane passes span 29-46 (YIGW…TATS), 118-133 (HFLL…EWEL), and 142-156 (WIAV…AATA). Position 118 (His-118) interacts with chlorophyll a. A pheophytin a-binding site is contributed by Tyr-126. Residues Asp-170 and Glu-189 each contribute to the [CaMn4O5] cluster site. A helical transmembrane segment spans residues 197–218 (FHMLGVAGVFGGSLFSAMHGSL). Residue His-198 coordinates chlorophyll a. Residues His-215 and 264-265 (SF) each bind a quinone. His-215 is a binding site for Fe cation. His-272 is a Fe cation binding site. Residues 274 to 288 (FLAAWPVVGIWFTAL) form a helical membrane-spanning segment. [CaMn4O5] cluster contacts are provided by His-332, Glu-333, Asp-342, and Ala-344. Positions 345 to 354 (ASIEAPSLNG) are excised as a propeptide.

It belongs to the reaction center PufL/M/PsbA/D family. In terms of assembly, PSII is composed of 1 copy each of membrane proteins PsbA, PsbB, PsbC, PsbD, PsbE, PsbF, PsbH, PsbI, PsbJ, PsbK, PsbL, PsbM, PsbT, PsbX, PsbY, PsbZ, Psb30/Ycf12, at least 3 peripheral proteins of the oxygen-evolving complex and a large number of cofactors. It forms dimeric complexes. The D1/D2 heterodimer binds P680, chlorophylls that are the primary electron donor of PSII, and subsequent electron acceptors. It shares a non-heme iron and each subunit binds pheophytin, quinone, additional chlorophylls, carotenoids and lipids. D1 provides most of the ligands for the Mn4-Ca-O5 cluster of the oxygen-evolving complex (OEC). There is also a Cl(-1) ion associated with D1 and D2, which is required for oxygen evolution. The PSII complex binds additional chlorophylls, carotenoids and specific lipids. is required as a cofactor. Post-translationally, tyr-161 forms a radical intermediate that is referred to as redox-active TyrZ, YZ or Y-Z. In terms of processing, C-terminally processed by CTPA; processing is essential to allow assembly of the oxygen-evolving complex and thus photosynthetic growth.

It localises to the plastid. The protein resides in the chloroplast thylakoid membrane. It carries out the reaction 2 a plastoquinone + 4 hnu + 2 H2O = 2 a plastoquinol + O2. Functionally, photosystem II (PSII) is a light-driven water:plastoquinone oxidoreductase that uses light energy to abstract electrons from H(2)O, generating O(2) and a proton gradient subsequently used for ATP formation. It consists of a core antenna complex that captures photons, and an electron transfer chain that converts photonic excitation into a charge separation. The D1/D2 (PsbA/PsbD) reaction center heterodimer binds P680, the primary electron donor of PSII as well as several subsequent electron acceptors. This is Photosystem II protein D1 from Selaginella uncinata (Blue spike-moss).